We begin with the raw amino-acid sequence, 198 residues long: Zinc finger protein 41 homolog (198 aa).

Residues 1–12 (MEKPAGRKKKTP) are compositionally biased toward basic residues. A disordered region spans residues 1–55 (MEKPAGRKKKTPTPREEADVQKSALREEKVSGDRKPPERPTVPRKPRTEPCLSPE). Positions 13–38 (TPREEADVQKSALREEKVSGDRKPPE) are enriched in basic and acidic residues. 4 consecutive C2H2-type zinc fingers follow at residues 87 to 109 (YECS…QRVH), 115 to 137 (FKCA…QRTH), 143 to 165 (FKCG…QKTH), and 171 to 193 (YECT…QKRH).

The protein belongs to the krueppel C2H2-type zinc-finger protein family.

It localises to the nucleus. In terms of biological role, a putative DNA-binding regulatory protein associated with meiosis in spermatogenesis. This chain is Zinc finger protein 41 homolog (ZFP41), found in Homo sapiens (Human).